We begin with the raw amino-acid sequence, 91 residues long: Acylphosphatase (91 aa).

The Acylphosphatase-like domain maps to 3–89; that stretch reads TLLVRISGKV…PDQPGFSQKP (87 aa). Active-site residues include Arg18 and Asn36.

This sequence belongs to the acylphosphatase family.

The enzyme catalyses an acyl phosphate + H2O = a carboxylate + phosphate + H(+). This chain is Acylphosphatase (acyP), found in Rhodospirillum rubrum (strain ATCC 11170 / ATH 1.1.1 / DSM 467 / LMG 4362 / NCIMB 8255 / S1).